The primary structure comprises 637 residues: Chaperone protein DnaK (637 aa).

Thr-196 carries the phosphothreonine; by autocatalysis modification. Disordered regions lie at residues 484 to 528 and 598 to 637; these read KATG…EVDT and TEAGAPGAAGAAGAAGQGQSASSGKDDEVKNADFEVVDDK. Over residues 501 to 528 the composition is skewed to basic and acidic residues; the sequence is SETEIEKMKKDASSHADEDKKKKEEVDT. Positions 600–620 are enriched in low complexity; it reads AGAPGAAGAAGAAGQGQSASS. A compositionally biased stretch (basic and acidic residues) spans 621 to 637; it reads GKDDEVKNADFEVVDDK.

This sequence belongs to the heat shock protein 70 family.

Acts as a chaperone. In Chloroherpeton thalassium (strain ATCC 35110 / GB-78), this protein is Chaperone protein DnaK.